The following is a 51-amino-acid chain: Small ribosomal subunit protein eS31 (51 aa).

Positions 22, 25, 40, and 43 each coordinate Zn(2+). A C4-type zinc finger spans residues 22–43; sequence CVRCSHGIFMADHGDRYACGRC.

The protein belongs to the eukaryotic ribosomal protein eS31 family. Part of the 30S ribosomal subunit. Zn(2+) is required as a cofactor.

The protein is Small ribosomal subunit protein eS31 of Methanosphaera stadtmanae (strain ATCC 43021 / DSM 3091 / JCM 11832 / MCB-3).